We begin with the raw amino-acid sequence, 205 residues long: Proteasome subunit beta type-3 (205 aa).

Ser2 is subject to N-acetylserine. Lys77 bears the N6-acetyllysine mark.

It belongs to the peptidase T1B family. In terms of assembly, the 26S proteasome consists of a 20S proteasome core and two 19S regulatory subunits. The 20S proteasome core is a barrel-shaped complex made of 28 subunits that are arranged in four stacked rings. The two outer rings are each formed by seven alpha subunits, and the two inner rings are formed by seven beta subunits. The proteolytic activity is exerted by three beta-subunits PSMB5, PSMB6 and PSMB7. Detected in liver (at protein level).

It is found in the cytoplasm. It localises to the nucleus. Non-catalytic component of the 20S core proteasome complex involved in the proteolytic degradation of most intracellular proteins. This complex plays numerous essential roles within the cell by associating with different regulatory particles. Associated with two 19S regulatory particles, forms the 26S proteasome and thus participates in the ATP-dependent degradation of ubiquitinated proteins. The 26S proteasome plays a key role in the maintenance of protein homeostasis by removing misfolded or damaged proteins that could impair cellular functions, and by removing proteins whose functions are no longer required. Associated with the PA200 or PA28, the 20S proteasome mediates ubiquitin-independent protein degradation. This type of proteolysis is required in several pathways including spermatogenesis (20S-PA200 complex) or generation of a subset of MHC class I-presented antigenic peptides (20S-PA28 complex). This is Proteasome subunit beta type-3 (Psmb3) from Mus musculus (Mouse).